A 179-amino-acid chain; its full sequence is Large ribosomal subunit protein uL6 (179 aa).

This sequence belongs to the universal ribosomal protein uL6 family. In terms of assembly, part of the 50S ribosomal subunit.

This protein binds to the 23S rRNA, and is important in its secondary structure. It is located near the subunit interface in the base of the L7/L12 stalk, and near the tRNA binding site of the peptidyltransferase center. In Acaryochloris marina (strain MBIC 11017), this protein is Large ribosomal subunit protein uL6.